The sequence spans 573 residues: Urease subunit alpha 1 (573 aa).

In terms of domain architecture, Urease spans 136 to 573 (GGIDTHVHFI…LPLAQRYFLF (438 aa)). Positions 141, 143, and 224 each coordinate Ni(2+). Lys224 is modified (N6-carboxylysine). His226 is a binding site for substrate. 2 residues coordinate Ni(2+): His253 and His279. Catalysis depends on His327, which acts as the Proton donor. Asp367 contacts Ni(2+).

It belongs to the metallo-dependent hydrolases superfamily. Urease alpha subunit family. May form a heterohexamer of 3 UreC (alpha) and 3 UreAB (gamma/beta) subunits. May also form a heterotrimer of UreA (gamma), UreB (beta) and UreC (alpha) subunits. Three heterotrimers associate to form the active enzyme. The cofactor is Ni cation. Carboxylation allows a single lysine to coordinate two nickel ions.

It localises to the cytoplasm. The enzyme catalyses urea + 2 H2O + H(+) = hydrogencarbonate + 2 NH4(+). It participates in nitrogen metabolism; urea degradation; CO(2) and NH(3) from urea (urease route): step 1/1. The chain is Urease subunit alpha 1 from Streptomyces coelicolor (strain ATCC BAA-471 / A3(2) / M145).